A 263-amino-acid chain; its full sequence is MKTILDFHDKKSKKQKISMITCYDYSFARIVADSDIDCILVGDSLAMVMLGHSTTLDVSASVMAHHTAAVVRGAGDKFVIADLPFMSYRKGLTANMTAVEKVMKAGAHAVKLEGAAGNLKLVRHLVDSGVPVMGHLGLTPQSVNQLGGFKVQGRDEKAQKKILEAALQLQDAGAFSVVLECVPSKLAKEITAALEIPTIGIGAGVDCDGQVLVLQDMLGMNQGFKPKFVKTYLDGFNTIKGALNQYHQEVSTEIFPSEKESYS.

Asp43 and Asp82 together coordinate Mg(2+). 3-methyl-2-oxobutanoate is bound by residues 43 to 44 (DS), Asp82, and Lys111. Residue Glu113 participates in Mg(2+) binding. Catalysis depends on Glu180, which acts as the Proton acceptor.

The protein belongs to the PanB family. In terms of assembly, homodecamer; pentamer of dimers. Mg(2+) serves as cofactor.

It localises to the cytoplasm. The enzyme catalyses 3-methyl-2-oxobutanoate + (6R)-5,10-methylene-5,6,7,8-tetrahydrofolate + H2O = 2-dehydropantoate + (6S)-5,6,7,8-tetrahydrofolate. It participates in cofactor biosynthesis; (R)-pantothenate biosynthesis; (R)-pantoate from 3-methyl-2-oxobutanoate: step 1/2. In terms of biological role, catalyzes the reversible reaction in which hydroxymethyl group from 5,10-methylenetetrahydrofolate is transferred onto alpha-ketoisovalerate to form ketopantoate. The protein is 3-methyl-2-oxobutanoate hydroxymethyltransferase of Bdellovibrio bacteriovorus (strain ATCC 15356 / DSM 50701 / NCIMB 9529 / HD100).